The primary structure comprises 784 residues: LPS-assembly protein LptD (784 aa).

An N-terminal signal peptide occupies residues 1-24 (MKKRIPTLLATMIATALYSQQGLA). 2 disulfide bridges follow: cysteine 31–cysteine 724 and cysteine 173–cysteine 725.

This sequence belongs to the LptD family. In terms of assembly, component of the lipopolysaccharide transport and assembly complex. Interacts with LptE and LptA. May interact with LptE during assembly of LptD by the beta-barrel assembly machine (BAM). Also interacts with LptM, which promotes the efficient assembly of the LptDE translocon by the BAM complex. Contains two intramolecular disulfide bonds. At least one disulfide bond is required for activity, and protein is probably fully oxidized in vivo.

It localises to the cell outer membrane. In terms of biological role, together with LptE, is involved in the assembly of lipopolysaccharide (LPS) at the surface of the outer membrane. Contributes to n-hexane resistance. This is LPS-assembly protein LptD from Escherichia coli (strain K12).